Consider the following 438-residue polypeptide: uncharacterized protein (438 aa).

Lysine 273 carries the post-translational modification N6-(pyridoxal phosphate)lysine.

This sequence belongs to the class-III pyridoxal-phosphate-dependent aminotransferase family. It depends on pyridoxal 5'-phosphate as a cofactor.

It is found in the mitochondrion. This is an uncharacterized protein from Schizosaccharomyces pombe (strain 972 / ATCC 24843) (Fission yeast).